Consider the following 264-residue polypeptide: Small ribosomal subunit protein mS23 (264 aa).

Positions Ala-233 to Phe-264 are disordered.

It belongs to the mitochondrion-specific ribosomal protein mS23 family. As to quaternary structure, component of the mitochondrial small ribosomal subunit. Mature mitochondrial ribosomes consist of a small (37S) and a large (54S) subunit. The 37S subunit contains at least 33 different proteins and 1 molecule of RNA (15S). The 54S subunit contains at least 45 different proteins and 1 molecule of RNA (21S).

It localises to the mitochondrion. The sequence is that of Small ribosomal subunit protein mS23 (RSM25) from Saccharomyces cerevisiae (strain YJM789) (Baker's yeast).